Reading from the N-terminus, the 356-residue chain is Alanine racemase, catabolic (356 aa).

The active-site Proton acceptor; specific for D-alanine is the lysine 35. Lysine 35 carries the N6-(pyridoxal phosphate)lysine modification. Position 130 (arginine 130) interacts with substrate. Tyrosine 253 serves as the catalytic Proton acceptor; specific for L-alanine. Methionine 301 is a binding site for substrate.

This sequence belongs to the alanine racemase family. Requires pyridoxal 5'-phosphate as cofactor.

It carries out the reaction L-alanine = D-alanine. Its function is as follows. Isomerizes L-alanine to D-alanine which is then oxidized to pyruvate by DadA. The polypeptide is Alanine racemase, catabolic (dadX) (Salmonella typhi).